Reading from the N-terminus, the 513-residue chain is Flagellin A (513 aa).

Belongs to the bacterial flagellin family. In terms of assembly, heteromer of FlaA and FlaB. FlaB is located proximal to the hook while the remainder of the filament is composed of the predominant FlaA.

It localises to the secreted. The protein localises to the bacterial flagellum. Its function is as follows. Flagellin is the subunit protein which polymerizes to form the filaments of bacterial flagella. Important for motility and virulence. The protein is Flagellin A (flaA) of Helicobacter felis (strain ATCC 49179 / CCUG 28539 / NCTC 12436 / CS1).